Reading from the N-terminus, the 308-residue chain is HPr kinase/phosphorylase (308 aa).

Catalysis depends on residues His-141 and Lys-162. 156–163 (GKSGVGKS) serves as a coordination point for ATP. Residue Ser-163 participates in Mg(2+) binding. The active-site Proton acceptor; for phosphorylation activity. Proton donor; for dephosphorylation activity is Asp-180. The tract at residues 204 to 213 (MEIRGVGILD) is important for the catalytic mechanism of both phosphorylation and dephosphorylation. Residue Glu-205 participates in Mg(2+) binding. Arg-246 is an active-site residue. Residues 267-272 (PVKPGR) form an important for the catalytic mechanism of dephosphorylation region.

Belongs to the HPrK/P family. As to quaternary structure, homohexamer. It depends on Mg(2+) as a cofactor.

The enzyme catalyses [HPr protein]-L-serine + ATP = [HPr protein]-O-phospho-L-serine + ADP + H(+). It carries out the reaction [HPr protein]-O-phospho-L-serine + phosphate + H(+) = [HPr protein]-L-serine + diphosphate. Catalyzes the ATP- as well as the pyrophosphate-dependent phosphorylation of a specific serine residue in HPr, a phosphocarrier protein of the phosphoenolpyruvate-dependent sugar phosphotransferase system (PTS). HprK/P also catalyzes the pyrophosphate-producing, inorganic phosphate-dependent dephosphorylation (phosphorolysis) of seryl-phosphorylated HPr (P-Ser-HPr). The two antagonistic activities of HprK/P are regulated by several intracellular metabolites, which change their concentration in response to the absence or presence of rapidly metabolisable carbon sources (glucose, fructose, etc.) in the growth medium. Therefore, by controlling the phosphorylation state of HPr, HPrK/P is a sensor enzyme that plays a major role in the regulation of carbon metabolism and sugar transport: it mediates carbon catabolite repression (CCR), and regulates PTS-catalyzed carbohydrate uptake and inducer exclusion. This chain is HPr kinase/phosphorylase, found in Peptoclostridium acidaminophilum (Eubacterium acidaminophilum).